Consider the following 398-residue polypeptide: MIKTAQSVGELTRAIKNELESLFPFVRVKGELSNVKQHSSGHVYLTLKDSEAQIPAVIWKSVRARSPLELRDGLEVIAEGRLEVWPPAGRYQLICTALFETGEGEQRLALERLIAKLAKAGWFDAERKKPIPRIPRRIGMITSPTGAVIRDMSDVFARRFPAAELLLYPVQVQGERAVESIVRALRYFNDPPKPEHKPDVLIVARGGGSSEDLQAFNDEAVAEAIYRSAIPVISAVGHETDLSVADMVADLRAGTPSIAAERAVPDREELLRLIDNLVNRQSILMEGLISGAQLQVDSITSSYAFNRPVQMLGQFEERLALMEKEMKRAIAEKVRDREQQLTAAADRLAMLDINRTLKRGFALVTQDDRYVTSAKSLEADAKIGLTFHDGQREARVTE.

Belongs to the XseA family. In terms of assembly, heterooligomer composed of large and small subunits.

The protein resides in the cytoplasm. It catalyses the reaction Exonucleolytic cleavage in either 5'- to 3'- or 3'- to 5'-direction to yield nucleoside 5'-phosphates.. Its function is as follows. Bidirectionally degrades single-stranded DNA into large acid-insoluble oligonucleotides, which are then degraded further into small acid-soluble oligonucleotides. The chain is Exodeoxyribonuclease 7 large subunit from Chlorobaculum tepidum (strain ATCC 49652 / DSM 12025 / NBRC 103806 / TLS) (Chlorobium tepidum).